Consider the following 352-residue polypeptide: tRNA-specific 2-thiouridylase MnmA (352 aa).

ATP is bound by residues 7-14 (GLSGGVDS) and Leu-33. The active-site Nucleophile is Cys-94. A disulfide bridge links Cys-94 with Cys-193. Gly-119 is a binding site for ATP. The interval 143 to 145 (KDQ) is interaction with tRNA. Cys-193 acts as the Cysteine persulfide intermediate in catalysis. An interaction with tRNA region spans residues 298–299 (RY).

This sequence belongs to the MnmA/TRMU family.

It is found in the cytoplasm. The catalysed reaction is S-sulfanyl-L-cysteinyl-[protein] + uridine(34) in tRNA + AH2 + ATP = 2-thiouridine(34) in tRNA + L-cysteinyl-[protein] + A + AMP + diphosphate + H(+). Catalyzes the 2-thiolation of uridine at the wobble position (U34) of tRNA, leading to the formation of s(2)U34. The polypeptide is tRNA-specific 2-thiouridylase MnmA (Microcystis aeruginosa (strain NIES-843 / IAM M-2473)).